The sequence spans 209 residues: tRNA (guanine-N(7)-)-methyltransferase (209 aa).

4 residues coordinate S-adenosyl-L-methionine: Asp-35, Glu-60, Asn-87, and Asp-113. Residue Asp-113 is part of the active site. Residues Lys-117 and Asp-149 each coordinate substrate.

This sequence belongs to the class I-like SAM-binding methyltransferase superfamily. TrmB family.

The catalysed reaction is guanosine(46) in tRNA + S-adenosyl-L-methionine = N(7)-methylguanosine(46) in tRNA + S-adenosyl-L-homocysteine. Its pathway is tRNA modification; N(7)-methylguanine-tRNA biosynthesis. Its function is as follows. Catalyzes the formation of N(7)-methylguanine at position 46 (m7G46) in tRNA. The polypeptide is tRNA (guanine-N(7)-)-methyltransferase (Prochlorococcus marinus (strain AS9601)).